The primary structure comprises 1005 residues: MKLLSVAAVALLAAQAAGASIKHRLNGFTILEHPDPAKRDLLQDIVTWDDKSLFINGERIMLFSGEVHPFRLPVPSLWLDIFHKIRALGFNCVSFYIDWALLEGKPGDYRAEGIFALEPFFDAAKEAGIYLIARPGSYINAEVSGGGFPGWLQRVNGTLRSSDEPFLKATDNYIANAAAAVAKAQITNGGPVILYQPENEYSGGCCGVKYPDADYMQYVMDQARKADIVVPFISNDASPSGHNAPGSGTGAVDIYGHDSYPLGFDCANPSVWPEGKLPDNFRTLHLEQSPSTPYSLLEFQAGAFDPWGGPGFEKCYALVNHEFSRVFYRNDLSFGVSTFNLYMTFGGTNWGNLGHPGGYTSYDYGSPITETRNVTREKYSDIKLLANFVKASPSYLTATPRNLTTGVYTDTSDLAVTPLIGDSPGSFFVVRHTDYSSQESTSYKLKLPTSAGNLTIPQLEGTLSLNGRDSKIHVVDYNVSGTNIIYSTAEVFTWKKFDGNKVLVLYGGPKEHHELAIASKSNVTIIEGSDSGIVSTRKGSSVIIGWDVSSTRRIVQVGDLRVFLLDRNSAYNYWVPELPTEGTSPGFSTSKTTASSIIVKAGYLLRGAHLDGADLHLTADFNATTPIEVIGAPTGAKNLFVNGEKASHTVDKNGIWSSEVKYAAPEIKLPGLKDLDWKYLDTLPEIKSSYDDSAWVSADLPKTKNTHRPLDTPTSLYSSDYGFHTGYLIYRGHFVANGKESEFFIRTQGGSAFGSSVWLNETYLGSWTGADYAMDGNSTYKLSQLESGKNYVITVVIDNLGLDENWTVGEETMKNPRGILSYKLSGQDASAITWKLTGNLGGEDYQDKVRGPLNEGGLYAERQGFHQPQPPSESWESGSPLEGLSKPGIGFYTAQFDLDLPKGWDVPLYFNFGNNTQAARAQLYVNGYQYGKFTGNVGPQTSFPVPEGILNYRGTNYVALSLWALESDGAKLGSFELSYTTPVLTGYGNVESPEQPKYEQRKGAY.

The signal sequence occupies residues 1-18; it reads MKLLSVAAVALLAAQAAG. Residues Tyr-96, Asn-140, Ala-141, and Glu-142 each coordinate substrate. The N-linked (GlcNAc...) asparagine glycan is linked to Asn-156. Asn-199 lines the substrate pocket. Glu-200 (proton donor) is an active-site residue. Cys-205 and Cys-206 are joined by a disulfide. A substrate-binding site is contributed by Tyr-260. Residues Cys-266 and Cys-315 are joined by a disulfide bond. Glu-298 acts as the Nucleophile in catalysis. A substrate-binding site is contributed by Tyr-364. 10 N-linked (GlcNAc...) asparagine glycosylation sites follow: Asn-373, Asn-402, Asn-453, Asn-478, Asn-522, Asn-622, Asn-760, Asn-777, Asn-805, and Asn-914.

The protein belongs to the glycosyl hydrolase 35 family.

It is found in the secreted. It catalyses the reaction Hydrolysis of terminal non-reducing beta-D-galactose residues in beta-D-galactosides.. Cleaves beta-linked terminal galactosyl residues from gangliosides, glycoproteins, and glycosaminoglycans. In Aspergillus flavus (strain ATCC 200026 / FGSC A1120 / IAM 13836 / NRRL 3357 / JCM 12722 / SRRC 167), this protein is Probable beta-galactosidase A (lacA).